The sequence spans 1584 residues: Dicer-like protein 1 (1584 aa).

Positions 31–60 (EDVVSDNDDRGNASDVESEDGVKRWTVNPE) are disordered. The Helicase ATP-binding domain maps to 129-310 (LFERAKQQNT…RAAAELEALL (182 aa)). Residue 142-149 (LDTGSGKT) participates in ATP binding. A DEAH box motif is present at residues 255 to 258 (DEAH). Residues 448-621 (KVIMLVRILR…EALPEDRKLT (174 aa)) form the Helicase C-terminal domain. Residues 654 to 744 (SLVCLANFTA…QSVFTKQLPE (91 aa)) enclose the Dicer dsRNA-binding fold domain. The region spanning 894–1028 (KALAYVSENE…LILEPMRISP (135 aa)) is the PAZ domain. RNase III domains lie at 1052–1207 (VALD…LTGQ) and 1258–1424 (AKKF…VDSE). Residues glutamate 1298, aspartate 1410, and glutamate 1413 each coordinate Mg(2+). Residues 1458–1545 (TFVANMMAHK…AKKAIKLLEG (88 aa)) form the DRBM domain. Zn(2+) is bound by residues cysteine 1470, histidine 1516, cysteine 1557, and cysteine 1559.

The protein belongs to the helicase family. Dicer subfamily. Mg(2+) serves as cofactor. Mn(2+) is required as a cofactor.

Functionally, dicer-like endonuclease involved in cleaving double-stranded RNA in the RNA interference (RNAi) pathway. Produces 21 to 25 bp dsRNAs (siRNAs) which target the selective destruction of homologous RNAs leading to sequence-specific suppression of gene expression, called post-transcriptional gene silencing (PTGS). Part of a broad host defense response against viral infection and transposons. Controls the expression of the non-LTR retrotransposon Tad in the African strain, Adiomopoume. The polypeptide is Dicer-like protein 1 (dcl-1) (Neurospora crassa (strain ATCC 24698 / 74-OR23-1A / CBS 708.71 / DSM 1257 / FGSC 987)).